Reading from the N-terminus, the 460-residue chain is tRNA (guanine(10)-N(2))-methyltransferase TRMT11 (460 aa).

Ala2 is subject to N-acetylalanine.

The protein belongs to the class I-like SAM-binding methyltransferase superfamily. TRM11 methyltransferase family. Part of the heterodimeric TRMT11-TRM112 methyltransferase complex; this complex forms an active tRNA methyltransferase, where TRMT112 acts as an activator of the catalytic subunit TRMT11.

The protein resides in the cytoplasm. The catalysed reaction is guanosine(10) in tRNA + S-adenosyl-L-methionine = N(2)-methylguanosine(10) in tRNA + S-adenosyl-L-homocysteine + H(+). Functionally, catalytic subunit of the TRMT11-TRM112 methyltransferase complex, that specifically mediates the S-adenosyl-L-methionine-dependent N(2)-methylation of guanosine nucleotide at position 10 (m2G10) in tRNAs. This is one of the major tRNA (guanine-N(2))-methyltransferases. This chain is tRNA (guanine(10)-N(2))-methyltransferase TRMT11, found in Bos taurus (Bovine).